The chain runs to 338 residues: Tetraacyldisaccharide 4'-kinase (338 aa).

Position 65–72 (65–72) interacts with ATP; sequence TVGGTGKT.

Belongs to the LpxK family.

It carries out the reaction a lipid A disaccharide + ATP = a lipid IVA + ADP + H(+). The protein operates within glycolipid biosynthesis; lipid IV(A) biosynthesis; lipid IV(A) from (3R)-3-hydroxytetradecanoyl-[acyl-carrier-protein] and UDP-N-acetyl-alpha-D-glucosamine: step 6/6. In terms of biological role, transfers the gamma-phosphate of ATP to the 4'-position of a tetraacyldisaccharide 1-phosphate intermediate (termed DS-1-P) to form tetraacyldisaccharide 1,4'-bis-phosphate (lipid IVA). The chain is Tetraacyldisaccharide 4'-kinase from Paraburkholderia xenovorans (strain LB400).